The sequence spans 306 residues: Plant-type L-asparaginase (306 aa).

Thr-176 (nucleophile) is an active-site residue. Residues Arg-203–Asp-206 and Thr-225–Gly-228 contribute to the substrate site.

Belongs to the Ntn-hydrolase family. As to quaternary structure, heterotetramer of two alpha and two beta chains arranged as a dimer of alpha/beta heterodimers. Autocleaved. Generates the alpha and beta subunits. The N-terminal residue of the beta subunit is thought to be responsible for the nucleophile hydrolase activity.

It catalyses the reaction L-asparagine + H2O = L-aspartate + NH4(+). In terms of biological role, catalyzes the hydrolysis of L-asparagine into L-aspartate and ammonia. This Pyrococcus furiosus (strain ATCC 43587 / DSM 3638 / JCM 8422 / Vc1) protein is Plant-type L-asparaginase.